A 298-amino-acid polypeptide reads, in one-letter code: 2-dehydropantoate 2-reductase (298 aa).

NADP(+) contacts are provided by residues 7–12 (GGGSVG), Asn-98, and Ala-124. Asn-98 is a substrate binding site. Lys-179 serves as the catalytic Proton donor. Substrate is bound by residues Asn-183, Asn-187, Asn-197, and Ser-246. Residue Glu-258 participates in NADP(+) binding.

This sequence belongs to the ketopantoate reductase family.

Its subcellular location is the cytoplasm. It catalyses the reaction (R)-pantoate + NADP(+) = 2-dehydropantoate + NADPH + H(+). Its pathway is cofactor biosynthesis; (R)-pantothenate biosynthesis; (R)-pantoate from 3-methyl-2-oxobutanoate: step 2/2. In terms of biological role, catalyzes the NADPH-dependent reduction of ketopantoate into pantoic acid. The chain is 2-dehydropantoate 2-reductase (panE) from Bacillus subtilis (strain 168).